Here is a 1484-residue protein sequence, read N- to C-terminus: Ral GTPase-activating protein subunit beta (1484 aa).

Disordered stretches follow at residues 355–437 (PRSD…APRR) and 699–728 (ENNL…PDSE). Serine 359 carries the post-translational modification Phosphoserine. A phosphothreonine mark is found at threonine 363 and threonine 379. Composition is skewed to polar residues over residues 369–381 (SMPQ…TTPP), 392–428 (NKAT…TSSE), and 701–725 (NLKS…PTTP). A phosphoserine mark is found at serine 421 and serine 710. A Phosphothreonine modification is found at threonine 724. Residues 1138-1382 (IGYLDLLPCR…TTLEKEVPVI (245 aa)) enclose the Rap-GAP domain. Serine 1275 is modified (phosphoserine). The interval 1297-1325 (PNHTDSLNSSQRLSPSSRMKKLPQGRPVP) is disordered. Residues 1302–1313 (SLNSSQRLSPSS) are compositionally biased toward low complexity.

As to quaternary structure, component of the heterodimeric RalGAP1 complex with RALGAPA1 and of the heterodimeric RalGAP2 complex with RALGAPA2. Heterodimerization is required for activity. As to expression, abundantly expressed in testis, pancreas, lung, thymus, brown fat, and white fat. Expressed at lower levels in the brain.

In terms of biological role, non-catalytic subunit of the heterodimeric RalGAP1 and RalGAP2 complexes which act as GTPase activators for the Ras-like small GTPases RALA and RALB. This Mus musculus (Mouse) protein is Ral GTPase-activating protein subunit beta (Ralgapb).